A 142-amino-acid polypeptide reads, in one-letter code: Large ribosomal subunit protein uL11 (142 aa).

This sequence belongs to the universal ribosomal protein uL11 family. In terms of assembly, part of the ribosomal stalk of the 50S ribosomal subunit. Interacts with L10 and the large rRNA to form the base of the stalk. L10 forms an elongated spine to which L12 dimers bind in a sequential fashion forming a multimeric L10(L12)X complex. In terms of processing, one or more lysine residues are methylated.

In terms of biological role, forms part of the ribosomal stalk which helps the ribosome interact with GTP-bound translation factors. This chain is Large ribosomal subunit protein uL11, found in Pasteurella multocida (strain Pm70).